We begin with the raw amino-acid sequence, 494 residues long: uncharacterized protein (494 aa).

A 2Fe-2S ferredoxin-type domain is found at 4–82 (FTITVKKTEG…NMIIEPLEGF (79 aa)). Residues C46, C51, C54, and C66 each contribute to the [2Fe-2S] cluster site. 2 consecutive 4Fe-4S ferredoxin-type domains span residues 127–157 (DLKDVKKIRGCIDCLSCIAMCPARKYSNYPG) and 178–208 (EKEAFDENIYNCTTCGRCVEVCPKEIDIVHN). [4Fe-4S] cluster is bound by residues C137, C140, C143, C147, C189, C192, C195, and C199.

This sequence belongs to the succinate dehydrogenase/fumarate reductase iron-sulfur protein family.

This is an uncharacterized protein from Methanococcus maripaludis (strain DSM 14266 / JCM 13030 / NBRC 101832 / S2 / LL).